The primary structure comprises 64 residues: Large ribosomal subunit protein bL35 (64 aa).

The tract at residues 19-44 (TGKLKASRPGRRHKLTGKTPKRKRQL) is disordered. Over residues 23–44 (KASRPGRRHKLTGKTPKRKRQL) the composition is skewed to basic residues.

This sequence belongs to the bacterial ribosomal protein bL35 family.

This is Large ribosomal subunit protein bL35 from Protochlamydia amoebophila (strain UWE25).